We begin with the raw amino-acid sequence, 532 residues long: Flavin-containing monooxygenase 3 (532 aa).

FAD-binding positions include G9–S13, E32, L40–W41, and N61–S62. Residues T60–N61 and S195–D198 contribute to the NADP(+) site. Phosphoserine is present on S401. Residues F510–G530 traverse the membrane as a helical segment.

This sequence belongs to the FMO family. The cofactor is FAD. As to expression, liver.

Its subcellular location is the microsome membrane. The protein resides in the endoplasmic reticulum membrane. The enzyme catalyses trimethylamine + NADPH + O2 = trimethylamine N-oxide + NADP(+) + H2O. It catalyses the reaction N,N-dimethylaniline + NADPH + O2 + H(+) = N,N-dimethylaniline N-oxide + NADP(+) + H2O. The catalysed reaction is hypotaurine + NADPH + O2 + H(+) = taurine + NADP(+) + H2O. It carries out the reaction (S)-nicotine + NADPH + O2 = trans-(S)-nicotine N(1')-oxide + NADP(+) + H2O. The enzyme catalyses albendazole + NADPH + O2 + H(+) = albendazole S-oxide + NADP(+) + H2O. Its function is as follows. Essential hepatic enzyme that catalyzes the oxygenation of a wide variety of nitrogen- and sulfur-containing compounds including drugs as well as dietary compounds. Plays an important role in the metabolism of trimethylamine (TMA), via the production of trimethylamine N-oxide (TMAO) metabolite. TMA is generated by the action of gut microbiota using dietary precursors such as choline, choline containing compounds, betaine or L-carnitine. By regulating TMAO concentration, FMO3 directly impacts both platelet responsiveness and rate of thrombus formation. In Macaca mulatta (Rhesus macaque), this protein is Flavin-containing monooxygenase 3 (FMO3).